The sequence spans 389 residues: Chalcone synthase (389 aa).

Residue Cys164 is part of the active site.

This sequence belongs to the thiolase-like superfamily. Chalcone/stilbene synthases family.

It carries out the reaction (E)-4-coumaroyl-CoA + 3 malonyl-CoA + 3 H(+) = 2',4,4',6'-tetrahydroxychalcone + 3 CO2 + 4 CoA. It participates in secondary metabolite biosynthesis; flavonoid biosynthesis. In terms of biological role, the primary product of this enzyme is 4,2',4',6'-tetrahydroxychalcone (also termed naringenin-chalcone or chalcone) which can under specific conditions spontaneously isomerize into naringenin. This chain is Chalcone synthase (CHS1), found in Casuarina glauca (Swamp oak).